We begin with the raw amino-acid sequence, 224 residues long: Prophage repressor CohE (224 aa).

This is Prophage repressor CohE (cohE) from Escherichia coli (strain K12).